The chain runs to 109 residues: Thiosulfate sulfurtransferase GlpE (109 aa).

One can recognise a Rhodanese domain in the interval 16-104 (RSNGAVVVDI…WRATFPSETA (89 aa)). Residue C64 is the Cysteine persulfide intermediate of the active site.

The protein belongs to the GlpE family.

The protein localises to the cytoplasm. The catalysed reaction is thiosulfate + hydrogen cyanide = thiocyanate + sulfite + 2 H(+). It catalyses the reaction thiosulfate + [thioredoxin]-dithiol = [thioredoxin]-disulfide + hydrogen sulfide + sulfite + 2 H(+). Functionally, transferase that catalyzes the transfer of sulfur from thiosulfate to thiophilic acceptors such as cyanide or dithiols. May function in a CysM-independent thiosulfate assimilation pathway by catalyzing the conversion of thiosulfate to sulfite, which can then be used for L-cysteine biosynthesis. This is Thiosulfate sulfurtransferase GlpE from Ectopseudomonas mendocina (strain ymp) (Pseudomonas mendocina).